A 283-amino-acid polypeptide reads, in one-letter code: Orotidine 5'-phosphate decarboxylase (283 aa).

The active-site Proton donor is the K97.

It belongs to the OMP decarboxylase family. Type 2 subfamily.

The catalysed reaction is orotidine 5'-phosphate + H(+) = UMP + CO2. The protein operates within pyrimidine metabolism; UMP biosynthesis via de novo pathway; UMP from orotate: step 2/2. The chain is Orotidine 5'-phosphate decarboxylase from Clostridium botulinum (strain ATCC 19397 / Type A).